The primary structure comprises 222 residues: MASDVGSHPLTVTRFRCRVHYVYNKLLILTLFAPVILESVIYVSGPQGGNVTLVSNFTSNISARWFRWDGNDSHLICFYKRGEGLSTPYVGLSLSCAANQITIFNLTLNDSGRYGAEGFTRSGENETFLWYNLTVKPKPLETTPASNVTTIVTTTSTVTDAKSNVTGNVSLAPQLRAVAGFSHQTPLENNTHLALVGVVVFLVLIVVCIMGWWKLLCSKSEL.

Residues Asn50, Asn56, Asn60, Asn71, Asn105, Asn109, Asn125, Asn132, Asn147, Asn164, Asn168, and Asn189 are each glycosylated (N-linked (GlcNAc...) asparagine; by host). The chain crosses the membrane as a helical span at residues 193 to 213 (LALVGVVVFLVLIVVCIMGWW).

The protein belongs to the RL11 family. Highly glycosylated.

The protein resides in the secreted. It is found in the host cell membrane. Its function is as follows. Plays a role in modulating the host immune response and affecting host cytokine production. Structurally and functionally homolog of host CEACAM1, induces endothelial cell angiogenesis. In Homo sapiens (Human), this protein is CEACAM1-like protein UL7 (UL7).